The primary structure comprises 260 residues: Trans-aconitate 2-methyltransferase (260 aa).

This sequence belongs to the methyltransferase superfamily. Tam family.

It localises to the cytoplasm. It carries out the reaction trans-aconitate + S-adenosyl-L-methionine = (E)-3-(methoxycarbonyl)pent-2-enedioate + S-adenosyl-L-homocysteine. Its function is as follows. Catalyzes the S-adenosylmethionine monomethyl esterification of trans-aconitate. In Paracidovorax citrulli (strain AAC00-1) (Acidovorax citrulli), this protein is Trans-aconitate 2-methyltransferase.